Consider the following 1214-residue polypeptide: Lysine-specific demethylase 3A (1214 aa).

Ser-150 and Ser-209 each carry phosphoserine. Residues 194-211 (TPSSNRQQNTPQAANSPP) are compositionally biased toward polar residues. 3 disordered regions span residues 194 to 215 (TPSS…NIGA), 271 to 293 (PKGS…STPQ), and 310 to 398 (KAEL…KSVL). The residue at position 330 (Ser-330) is a Phosphoserine. Residues 361 to 370 (LGSQSQNLKE) show a composition bias toward polar residues. The segment covering 371–380 (TSVKVDHDSC) has biased composition (basic and acidic residues). Polar residues predominate over residues 381-391 (CTRSSNKTQTP). A C6-type zinc finger spans residues 546–571 (CDVCDTTIFNLHWVCPRCGFGVCVDC). Residues 769–773 (LRNLL) carry the LXXLL motif motif. Residue Lys-779 is modified to N6-acetyllysine. A JmjC domain is found at 944–1167 (MPSRFDDLMA…HCFWLTQEFR (224 aa)). Fe cation-binding residues include His-1006, Asp-1008, and His-1135.

The protein belongs to the JHDM2 histone demethylase family. In terms of assembly, interacts with VRK1. The cofactor is Fe(2+). Testis specific. Expressed only in male germ cells.

The protein localises to the cytoplasm. The protein resides in the nucleus. It catalyses the reaction N(6),N(6)-dimethyl-L-lysyl(9)-[histone H3] + 2 2-oxoglutarate + 2 O2 = L-lysyl(9)-[histone H3] + 2 formaldehyde + 2 succinate + 2 CO2. Functionally, histone demethylase that specifically demethylates 'Lys-9' of histone H3, thereby playing a central role in histone code. Preferentially demethylates mono- and dimethylated H3 'Lys-9' residue, with a preference for dimethylated residue, while it has weak or no activity on trimethylated H3 'Lys-9'. Demethylation of Lys residue generates formaldehyde and succinate. Involved in hormone-dependent transcriptional activation, by participating in recruitment to androgen-receptor target genes, resulting in H3 'Lys-9' demethylation and transcriptional activation. Involved in spermatogenesis by regulating expression of target genes such as PRM1 and TNP1 which are required for packaging and condensation of sperm chromatin. Directly regulates expression of PPARA and UCP1 and is involved in obesity resistance. The chain is Lysine-specific demethylase 3A (Kdm3a) from Rattus norvegicus (Rat).